Reading from the N-terminus, the 81-residue chain is Protein translocase subunit SecE (81 aa).

A helical transmembrane segment spans residues 50-70 (VAVILMVILVSTVIYFVDQIF).

The protein belongs to the SecE/SEC61-gamma family. In terms of assembly, component of the Sec protein translocase complex. Heterotrimer consisting of SecY, SecE and SecG subunits. The heterotrimers can form oligomers, although 1 heterotrimer is thought to be able to translocate proteins. Interacts with the ribosome. Interacts with SecDF, and other proteins may be involved. Interacts with SecA.

The protein localises to the cell inner membrane. It is found in the cellular thylakoid membrane. Functionally, essential subunit of the Sec protein translocation channel SecYEG. Clamps together the 2 halves of SecY. May contact the channel plug during translocation. In Synechocystis sp. (strain ATCC 27184 / PCC 6803 / Kazusa), this protein is Protein translocase subunit SecE.